The sequence spans 198 residues: Sorcin (198 aa).

4 EF-hand domains span residues 29–64, 70–103, 100–135, and 134–169; these read GQTQ…SGIA, FNLE…AVLN, AVLN…MGFR, and FRLS…LRAL. Residues Asp83, Asp85, Ser87, Thr89, Glu94, Asp113, Asp115, Ser117, Thr119, and Glu124 each coordinate Ca(2+).

Homodimer. Interacts with GCA, RYR2 and ANXA7. Detected in cardiac myocytes.

The protein resides in the cytoplasm. Its subcellular location is the sarcoplasmic reticulum membrane. In terms of biological role, calcium-binding protein that modulates excitation-contraction coupling in the heart. Contributes to calcium homeostasis in the heart sarcoplasmic reticulum. Modulates the activity of RYR2 calcium channels. This chain is Sorcin (SRI), found in Homo sapiens (Human).